The chain runs to 110 residues: MAKAILKFIRVSPIKARLIAREVQGMNAEYAIASLQFTPNKAAGIISKVIASAVANAGLDPVDAVITSARVDKGPVLKRFTPRARGSASPKHKPTAHIMIEVAAATKGDK.

This sequence belongs to the universal ribosomal protein uL22 family. Part of the 50S ribosomal subunit.

Functionally, this protein binds specifically to 23S rRNA; its binding is stimulated by other ribosomal proteins, e.g. L4, L17, and L20. It is important during the early stages of 50S assembly. It makes multiple contacts with different domains of the 23S rRNA in the assembled 50S subunit and ribosome. Its function is as follows. The globular domain of the protein is located near the polypeptide exit tunnel on the outside of the subunit, while an extended beta-hairpin is found that lines the wall of the exit tunnel in the center of the 70S ribosome. The sequence is that of Large ribosomal subunit protein uL22 from Aliarcobacter butzleri (strain RM4018) (Arcobacter butzleri).